The primary structure comprises 1557 residues: Target of rapamycin complex 1 subunit KOG1 (1557 aa).

HEAT repeat units follow at residues 548 to 586 (RHPPEQLPIVLQVLLSQVHRIRALVLLSRFLDLGPWAVY), 588 to 625 (SLSIGIFPYVLKLLQSPAPELKPILVFIWARIMSIDYK), 777 to 814 (CMNTGAVEILLKSLKDPVPEVRTASIFALKHFISGFQD), and 888 to 925 (RQEIGNLISILPLINDGSSLVRKELVVYFSHIVSRYSN). Over residues 1084 to 1098 (SESNSDSDTQSSNTS) the composition is skewed to low complexity. The interval 1084–1114 (SESNSDSDTQSSNTSMKSHTSKKGPSGLYLL) is disordered. 7 WD repeats span residues 1207 to 1248 (NNKS…SKFS), 1252 to 1293 (PFGT…DTFK), 1296 to 1346 (SAWR…VEVD), 1350 to 1390 (KTSS…RDSM), 1400 to 1440 (KQGV…PVES), 1452 to 1492 (SQQK…NSFK), and 1517 to 1557 (TSDA…IDYF).

The protein belongs to the WD repeat RAPTOR family. The target of rapamycin complex 1 (TORC1) is composed of at least KOG1, LST8, TCO89 and either TOR1 (TORC1-A) or TOR2 (TORC1-B). Interacts with PIB2; following activation of PIB2 by glutamine or cysteine. TORC1 binds to and is inhibited by FKBP-rapamycin.

Its subcellular location is the cell membrane. It localises to the vacuole membrane. Its function is as follows. Component of TORC1, which regulates multiple cellular processes to control cell growth in response to environmental signals. Nutrient limitation and environmental stress signals cause inactivation of TORC1. Active TORC1 positively controls ribosome biogenesis via control of rRNA, ribosomal protein and tRNA gene expression, and rRNA processing. TORC1 positively controls protein biosynthesis by regulation of mRNA stability, translation initiation factor activity, and high-affinity amino acid permeases that serve to provide amino acids for use by the translation machinery. TORC1 also promotes growth by sequestering a number of nutrient and general stress-responsive transcription factors in the cytoplasm. TORC1 negatively controls macroautophagy, a process to recycle surplus cytoplasmic mass under nutrient starvation conditions. KOG1 may have a role in binding and recruiting substrates of TORC1. The chain is Target of rapamycin complex 1 subunit KOG1 (KOG1) from Saccharomyces cerevisiae (strain ATCC 204508 / S288c) (Baker's yeast).